A 478-amino-acid chain; its full sequence is Divinyl ether synthase CYP74D2 (478 aa).

Position 431 (Cys431) interacts with heme.

The protein belongs to the cytochrome P450 family. 9-divinyl ether synthase subfamily. Expressed in roots.

It carries out the reaction (9S)-hydroperoxy-(10E,12Z)-octadecadienoate = colneleate + H2O. The enzyme catalyses (9S)-hydroperoxy-(10E,12Z,15Z)-octadecatrienoate = colnelenate + H2O. Functionally, involved in the biosynthesis of the anti-fungal and antibacterial toxins colneleate and colnelenate. Can use (9S)-hydroperoxy-(10E,12Z)-octadecadienoate (9-HPOD) and (9S)-hydroperoxy-(10E,12Z,15Z)-octadecatrienoate (9-HPOT) as substrates but has no activity with the corresponding 13-hydroperoxides (13-HPOD and 13-HPOT). This is Divinyl ether synthase CYP74D2 from Solanum tuberosum (Potato).